Consider the following 67-residue polypeptide: DNA-directed RNA polymerases I, II, and III subunit RPABC5 (67 aa).

Zn(2+)-binding residues include Cys-7, Cys-10, Cys-44, and Cys-45.

It belongs to the archaeal Rpo10/eukaryotic RPB10 RNA polymerase subunit family. Component of the RNA polymerase I (Pol I), RNA polymerase II (Pol II) and RNA polymerase III (Pol III) complexes consisting of at least 13, 12 and 17 subunits, respectively. Pol I complex consists of a ten-subunit catalytic core composed of POLR1A/RPA1, POLR1B/RPA2, POLR1C/RPAC1, POLR1D/RPAC2, POLR1H/RPA12, POLR2E/RPABC1, POLR2F/RPABC2, POLR2H/RPABC3, POLR2K/RPABC4 and POLR2L/RPABC5; a mobile stalk subunit POLR1F/RPA43 protruding from the core and additional subunits homologous to general transcription factors POLR1E/RPA49 and POLR1G/RPA34. Part of Pol I pre-initiation complex (PIC), in which Pol I core assembles with RRN3 and promoter-bound UTBF and SL1/TIF-IB complex. Pol II complex contains a ten-subunit catalytic core composed of POLR2A/RPB1, POLR2B/RPB2, POLR2C/RPB3, POLR2I/RPB9, POLR2J/RPB11, POLR2E/RPABC1, POLR2F/RPABC2, POLR2H/RPABC3, POLR2K/RPABC4 and POLR2L/RPABC5 and a mobile stalk composed of two subunits POLR2D/RPB4 and POLR2G/RPB7. Part of Pol II(G) complex, in which Pol II core associates with an additional subunit POLR2M; unlike conventional Pol II, Pol II(G) functions as a transcriptional repressor. Part of TBP-based Pol II pre-initiation complex (PIC), in which Pol II core assembles with general transcription factors and other specific initiation factors including GTF2E1, GTF2E2, GTF2F1, GTF2F2, TCEA1, ERCC2, ERCC3, GTF2H2, GTF2H3, GTF2H4, GTF2H5, GTF2A1, GTF2A2, GTF2B and TBP; this large multi-subunit PIC complex mediates DNA unwinding and targets Pol II core to the transcription start site where the first phosphodiester bond forms. Pol III complex consists of a ten-subunit catalytic core composed of POLR3A/RPC1, POLR3B/RPC2, POLR1C/RPAC1, POLR1D/RPAC2, POLR3K/RPC10, POLR2E/RPABC1, POLR2F/RPABC2, POLR2H/RPABC3, POLR2K/RPABC4 and POLR2L/RPABC5; a mobile stalk composed of two subunits POLR3H/RPC8 and CRCP/RPC9, protruding from the core and functioning primarily in transcription initiation; and additional subunits homologous to general transcription factors of the RNA polymerase II machinery, POLR3C/RPC3-POLR3F/RPC6-POLR3G/RPC7 heterotrimer required for transcription initiation and POLR3D/RPC4-POLR3E/RPC5 heterodimer involved in both transcription initiation and termination.

The protein localises to the nucleus. It localises to the nucleolus. Its function is as follows. DNA-dependent RNA polymerase catalyzes the transcription of DNA into RNA using the four ribonucleoside triphosphates as substrates. Common component of RNA polymerases I, II and III which synthesize ribosomal RNA precursors, mRNA precursors and many functional non-coding RNAs, and a small RNAs, such as 5S rRNA and tRNAs, respectively. In Bos taurus (Bovine), this protein is DNA-directed RNA polymerases I, II, and III subunit RPABC5 (POLR2L).